A 366-amino-acid chain; its full sequence is NAD(P)H-quinone oxidoreductase subunit 1, chloroplastic (366 aa).

Transmembrane regions (helical) follow at residues Trp-29–Val-49, Leu-97–Ile-117, Ile-130–Gly-150, Val-166–Leu-186, Phe-202–Ala-222, Phe-254–Val-274, Val-307–Val-327, and Leu-340–Ala-360.

This sequence belongs to the complex I subunit 1 family. In terms of assembly, NDH is composed of at least 16 different subunits, 5 of which are encoded in the nucleus.

Its subcellular location is the plastid. It localises to the chloroplast thylakoid membrane. The enzyme catalyses a plastoquinone + NADH + (n+1) H(+)(in) = a plastoquinol + NAD(+) + n H(+)(out). It catalyses the reaction a plastoquinone + NADPH + (n+1) H(+)(in) = a plastoquinol + NADP(+) + n H(+)(out). NDH shuttles electrons from NAD(P)H:plastoquinone, via FMN and iron-sulfur (Fe-S) centers, to quinones in the photosynthetic chain and possibly in a chloroplast respiratory chain. The immediate electron acceptor for the enzyme in this species is believed to be plastoquinone. Couples the redox reaction to proton translocation, and thus conserves the redox energy in a proton gradient. In Anthoceros angustus (Hornwort), this protein is NAD(P)H-quinone oxidoreductase subunit 1, chloroplastic.